Consider the following 463-residue polypeptide: A-type ATP synthase subunit B (463 aa).

Belongs to the ATPase alpha/beta chains family. As to quaternary structure, has multiple subunits with at least A(3), B(3), C, D, E, F, H, I and proteolipid K(x).

It is found in the cell membrane. In terms of biological role, component of the A-type ATP synthase that produces ATP from ADP in the presence of a proton gradient across the membrane. The B chain is a regulatory subunit. This is A-type ATP synthase subunit B from Aeropyrum pernix (strain ATCC 700893 / DSM 11879 / JCM 9820 / NBRC 100138 / K1).